A 301-amino-acid chain; its full sequence is Ubiquitin thioesterase OTU1 (301 aa).

The segment at 4-80 (KVTGAGINQV…TIESSDSNES (77 aa)) is UBX-like. An OTU domain is found at 109-229 (LSVHPVLDDN…GIHYDSLTMN (121 aa)). Residues 114–120 (VLDDNSC) form a cys-loop region. Asp117 is an active-site residue. Cys120 serves as the catalytic Nucleophile. Lys160 is covalently cross-linked (Glycyl lysine isopeptide (Lys-Gly) (interchain with G-Cter in ubiquitin)). A variable-loop region spans residues 169–179 (ILKMESWGGAI). The interval 218 to 222 (FNGIH) is his-loop. A substrate-binding site is contributed by Ile221. The active site involves His222. Residues 243-248 (DDVLTA) are S2 site. The C2H2-type zinc-finger motif lies at 270 to 294 (IKCNTCQMTFVGEREVARHAESTGH). Residue His294 is part of the active site.

In terms of assembly, forms a complex composed of CDC48, NPL4, UFD1, DOA1, SHP1 and deubiquitinase OTU1; within the complex interacts with CDC48 and DOA1/UFD3.

Its subcellular location is the cytoplasm. It is found in the nucleus. It catalyses the reaction Thiol-dependent hydrolysis of ester, thioester, amide, peptide and isopeptide bonds formed by the C-terminal Gly of ubiquitin (a 76-residue protein attached to proteins as an intracellular targeting signal).. Hydrolase that can remove conjugated ubiquitin from proteins and may therefore play an important regulatory role at the level of protein turnover by preventing degradation. Participates in the regulation of the ubiquitin conjugation pathway involving CDC48 by hindering multiubiquitination of substrates at the CDC48 chaperone. May be indirectly involved in PIS1 gene expression. This is Ubiquitin thioesterase OTU1 (OTU1) from Saccharomyces cerevisiae (strain ATCC 204508 / S288c) (Baker's yeast).